A 1099-amino-acid polypeptide reads, in one-letter code: MDASEFMDTMDPSLSELGDEFTLGDIDEMLQFVSNQVDFPDIFEDQMGGGATARTLPQAVPSAILTPPHTPVQTSSQTHTQTLTQAHTQTHTQTHTQTRTPPVLQPRPQPITQVQTQTFPMQTLAVQTQAQPQTVMITPTATPSRFIQNQVICQQNNATSFQVLQPQMQSIMTSPQVQPMTIQHQRVLTPAGQTIQTLSTAPTTVHTMSQQVPVLVHQPQILKTDSLLLTTKPDGTQVLSTVQSPTGITTLTTPIQTTALQMPTLMSSNILTTVPVVMGGGDKLPIKQLSSGPAHNIGGARVGVEQSPVVGPGGVVKEGERRTTHNIIEKRYRSSINDKILELRDLVLGNDAKMHKSGVLRKAIDYIKYLQQVNHKLRQENLTLKMANQKNKSACVSDVDLELKAEVSLISPPPSDSGSSSPAQLSPYCIDSEPGSPLLEHEQLKSEPDSPSCVGVMDRSRLLLCALSFLCLSLNPLPSLLGAEAPAGSPEVAGHGPTRTLFSLPAQTQSFGAWLWCVLPFLLVWVVSGVGVVWGCVRVLYLWEPVTPLHSPTSVRFWRHRKQADLQLYRGDYAGAVLSLQTCLSVLSRVLPVTTLDIMCSLSWNLIRYCLRRPAPLGWLVRLVGGRHEGEESQTSSRDAALVYHKLSQLQLTGQMERRPLWGVCVSLSAVNLCESAEGKLTATQQVQVYVTAAISVRAALGKHLTCLPAYLLSCAEALTCQSDSKPLPDCLRWIFTPLGRQFFLSCDWSVRSESDGQIFTSARDKADPIAQLHRCFCQKLLERATHTLIEPQSREDAGEFTGVLEFLQLLNSCTEDSAPSTAPFPALANQSSTSVRDPVCRWWASVLTAAVHWLQGDDASVRSLLAEAERMPRALHTLDHPLPKAVLALCKAVQMSVCPQKGEGVVSCLSHCQRASAQLHISVCQSHNNTWLHKGVELLVCDLLLTLRTSLWQRGGGSNGEPGPAPGSQLSGFQRDLSSLRRLGQAHRQAQHKLFLHETTVRLMAGASPTRTHQLLRHRTHNYTTTDGECVLGERERAHAILLACRHLPLPLLTPPGHRARLLAEAKRTLERVGDRRSLQDCQHILLRLSGGTTIAAS.

Residues methionine 1 to methionine 47 are transcriptional activation (acidic). Topologically, residues methionine 1–arginine 461 are cytoplasmic. The segment at leucine 65 to arginine 107 is disordered. Residues proline 71–threonine 100 show a composition bias toward low complexity. The region spanning glutamate 320 to leucine 370 is the bHLH domain. The segment at leucine 370 to asparagine 391 is leucine-zipper. Residues leucine 462 to glycine 482 traverse the membrane as a helical segment. Over alanine 483 to alanine 513 the chain is Lumenal. A helical transmembrane segment spans residues tryptophan 514–tryptophan 534. The Cytoplasmic portion of the chain corresponds to glycine 535–serine 1099.

The protein belongs to the SREBP family. As to quaternary structure, forms a tight complex with scap, the SCAP-SREBP complex, in the endoplasmic reticulum membrane. Homodimer; efficient DNA binding of the soluble transcription factor fragment requires dimerization with another bHLH protein. In terms of processing, processed in the Golgi apparatus, releasing the protein from the membrane. At low cholesterol the SCAP-SREBP complex is recruited into COPII vesicles for export from the endoplasmic reticulum. In the Golgi, complex SREBPs are cleaved sequentially by site-1 (mbtps1, S1P) and site-2 (mbtps2, S2P) protease. The first cleavage by site-1 protease occurs within the luminal loop, the second cleavage by site-2 protease occurs within the first transmembrane domain, releasing the transcription factor from the Golgi membrane.

The protein localises to the endoplasmic reticulum membrane. The protein resides in the golgi apparatus membrane. Its subcellular location is the cytoplasmic vesicle. It localises to the COPII-coated vesicle membrane. It is found in the nucleus. In terms of biological role, precursor of the transcription factor form (Processed sterol regulatory element-binding protein 2), which is embedded in the endoplasmic reticulum membrane. Low sterol concentrations promote processing of this form, releasing the transcription factor form that translocates into the nucleus and activates transcription of genes involved in cholesterol biosynthesis. Key transcription factor that regulates expression of genes involved in cholesterol biosynthesis. Binds to the sterol regulatory element 1 (SRE-1) (5'-ATCACCCCAC-3'). Has dual sequence specificity binding to both an E-box motif (5'-ATCACGTGA-3') and to SRE-1 (5'-ATCACCCCAC-3'). Regulates transcription of genes related to cholesterol synthesis pathway. Activated by mediated cholesterol efflux, transactivates NOTCH and promotes hematopoietic stem and progenitor cell emergence. The polypeptide is Sterol regulatory element-binding protein 2 (Danio rerio (Zebrafish)).